The primary structure comprises 673 residues: Ion-translocating oxidoreductase complex subunit C (673 aa).

2 consecutive 4Fe-4S ferredoxin-type domains span residues 368–397 (MGAPQEEKSCIRCSACADACPADLLPQQLY) and 407–436 (KATAHHIADCIECGACAWVCPSNIPLVQYF). Positions 377, 380, 383, 387, 416, 419, 422, and 426 each coordinate [4Fe-4S] cluster. Disordered regions lie at residues 534 to 553 (QARAKQAAHPVADSAISGGA) and 563 to 653 (IARA…AAVA).

Belongs to the 4Fe4S bacterial-type ferredoxin family. RnfC subfamily. In terms of assembly, the complex is composed of six subunits: RsxA, RsxB, RsxC, RsxD, RsxE and RsxG. [4Fe-4S] cluster serves as cofactor.

The protein localises to the cell inner membrane. Functionally, part of a membrane-bound complex that couples electron transfer with translocation of ions across the membrane. Required to maintain the reduced state of SoxR. In Salmonella gallinarum (strain 287/91 / NCTC 13346), this protein is Ion-translocating oxidoreductase complex subunit C.